Consider the following 186-residue polypeptide: ATP synthase subunit delta (186 aa).

The protein belongs to the ATPase delta chain family. F-type ATPases have 2 components, F(1) - the catalytic core - and F(0) - the membrane proton channel. F(1) has five subunits: alpha(3), beta(3), gamma(1), delta(1), epsilon(1). CF(0) has four main subunits: a(1), b(1), b'(1) and c(10-14). The alpha and beta chains form an alternating ring which encloses part of the gamma chain. F(1) is attached to F(0) by a central stalk formed by the gamma and epsilon chains, while a peripheral stalk is formed by the delta, b and b' chains.

The protein resides in the cell inner membrane. In terms of biological role, f(1)F(0) ATP synthase produces ATP from ADP in the presence of a proton or sodium gradient. F-type ATPases consist of two structural domains, F(1) containing the extramembraneous catalytic core and F(0) containing the membrane proton channel, linked together by a central stalk and a peripheral stalk. During catalysis, ATP synthesis in the catalytic domain of F(1) is coupled via a rotary mechanism of the central stalk subunits to proton translocation. Its function is as follows. This protein is part of the stalk that links CF(0) to CF(1). It either transmits conformational changes from CF(0) to CF(1) or is implicated in proton conduction. In Dinoroseobacter shibae (strain DSM 16493 / NCIMB 14021 / DFL 12), this protein is ATP synthase subunit delta.